The following is a 118-amino-acid chain: Large ribosomal subunit protein bL19 (118 aa).

It belongs to the bacterial ribosomal protein bL19 family.

In terms of biological role, this protein is located at the 30S-50S ribosomal subunit interface and may play a role in the structure and function of the aminoacyl-tRNA binding site. In Geotalea daltonii (strain DSM 22248 / JCM 15807 / FRC-32) (Geobacter daltonii), this protein is Large ribosomal subunit protein bL19.